Here is a 494-residue protein sequence, read N- to C-terminus: Glutamyl-tRNA reductase (494 aa).

Substrate is bound by residues 58 to 61 (TCNR), Ser-118, 123 to 125 (EQQ), and Gln-129. Cys-59 serves as the catalytic Nucleophile. NADP(+) is bound at residue 205-210 (GAGAMA). The tract at residues 448-494 (KGANAGSGQRKKQKPQENRVSTARAVYRSTYQDLTQASTPGGKDDDQ) is disordered. Residues 476 to 486 (STYQDLTQAST) show a composition bias toward polar residues.

This sequence belongs to the glutamyl-tRNA reductase family. Homodimer.

It catalyses the reaction (S)-4-amino-5-oxopentanoate + tRNA(Glu) + NADP(+) = L-glutamyl-tRNA(Glu) + NADPH + H(+). It functions in the pathway porphyrin-containing compound metabolism; protoporphyrin-IX biosynthesis; 5-aminolevulinate from L-glutamyl-tRNA(Glu): step 1/2. Its function is as follows. Catalyzes the NADPH-dependent reduction of glutamyl-tRNA(Glu) to glutamate 1-semialdehyde (GSA). This Corynebacterium urealyticum (strain ATCC 43042 / DSM 7109) protein is Glutamyl-tRNA reductase.